Here is a 475-residue protein sequence, read N- to C-terminus: Putative aldehyde dehydrogenase (475 aa).

Residues 146 to 147 (WN) and 223 to 224 (GS) each bind NAD(+). The active-site Proton acceptor is E245. L246 lines the NAD(+) pocket. C279 (nucleophile) is an active-site residue. An NAD(+)-binding site is contributed by E379.

Belongs to the aldehyde dehydrogenase family.

The catalysed reaction is an aldehyde + NAD(+) + H2O = a carboxylate + NADH + 2 H(+). The protein is Putative aldehyde dehydrogenase of Staphylococcus aureus (strain USA300).